Here is a 269-residue protein sequence, read N- to C-terminus: Protein MrkE (269 aa).

The Response regulatory domain maps to 59-173 (KVIIVEDEFL…RIINMLQKLT (115 aa)). 4-aspartylphosphate is present on aspartate 110. In terms of domain architecture, HTH LytTR-type spans 197–269 (INLIKDERII…VAQVSIANRF (73 aa)).

In terms of biological role, may be involved in the regulation of fimbrial expression. The protein is Protein MrkE (mrkE) of Klebsiella pneumoniae.